Here is a 227-residue protein sequence, read N- to C-terminus: DNA mismatch repair protein MutH (227 aa).

The protein belongs to the MutH family.

Its subcellular location is the cytoplasm. In terms of biological role, sequence-specific endonuclease that cleaves unmethylated GATC sequences. It is involved in DNA mismatch repair. This chain is DNA mismatch repair protein MutH, found in Vibrio vulnificus (strain CMCP6).